Here is a 125-residue protein sequence, read N- to C-terminus: Small ribosomal subunit protein mS41 (125 aa).

A mitochondrion-targeting transit peptide spans 1 to 10; that stretch reads MLSIFGCVRA. Residues 103-125 form a disordered region; sequence SFFGGERNRKATVAKWRAEQRNK.

The protein belongs to the mitochondrion-specific ribosomal protein mS41 family.

The protein localises to the mitochondrion. In terms of biological role, involved in telomere length regulation. This Candida glabrata (strain ATCC 2001 / BCRC 20586 / JCM 3761 / NBRC 0622 / NRRL Y-65 / CBS 138) (Yeast) protein is Small ribosomal subunit protein mS41 (FYV4).